The following is a 235-amino-acid chain: Purine nucleoside phosphorylase DeoD-type (235 aa).

His-4 provides a ligand contact to a purine D-ribonucleoside. Phosphate contacts are provided by residues Gly-20, Arg-24, Arg-43, and 87–90 (RVGT). A purine D-ribonucleoside-binding positions include Glu-162, 179-181 (EME), and 203-204 (SD). Catalysis depends on Asp-204, which acts as the Proton donor.

This sequence belongs to the PNP/UDP phosphorylase family. As to quaternary structure, homohexamer; trimer of homodimers.

The enzyme catalyses a purine D-ribonucleoside + phosphate = a purine nucleobase + alpha-D-ribose 1-phosphate. The catalysed reaction is a purine 2'-deoxy-D-ribonucleoside + phosphate = a purine nucleobase + 2-deoxy-alpha-D-ribose 1-phosphate. Catalyzes the reversible phosphorolytic breakdown of the N-glycosidic bond in the beta-(deoxy)ribonucleoside molecules, with the formation of the corresponding free purine bases and pentose-1-phosphate. The protein is Purine nucleoside phosphorylase DeoD-type of Bacillus anthracis (strain CDC 684 / NRRL 3495).